The sequence spans 513 residues: Cytochrome P450 monooxygenase asaD (513 aa).

The chain crosses the membrane as a helical span at residues 14–34 (ILYPFLFGIFAVASLCIATLL). Residues asparagine 258, asparagine 370, asparagine 431, and asparagine 441 are each glycosylated (N-linked (GlcNAc...) asparagine). Position 461 (cysteine 461) interacts with heme.

It belongs to the cytochrome P450 family. It depends on heme as a cofactor.

Its subcellular location is the membrane. The protein operates within secondary metabolite biosynthesis. In terms of biological role, cytochrome P450 monooxygenase; part of the gene cluster that mediates the biosynthesis of aspergillic acid, a hydroxamic acid-containing pyrazinone with aliphatic side chains that originates from leucine (Leu) and isoleucine (Ile). Aspergillic acid has antibiotic properties and was shown to be lethal to mice. The first step in the pathway is the production of deoxyaspergillic acid via a condensation between the Ile amine and the Leu carboxylic acid, followed by a reductive release from the protein forming the dipeptide aldehyde NH(2)-Leu-Ile-CHO, which could undergo an intermolecular cyclization resulting in a dihydropyrazinone. As the NRPS asaC lacks a condensation domain, it is improbable that it is responsible for condensation of Leu and Ile. One possibility is that asaC acts on a previously condensed dipeptide and functions as a Leu-Ile reductase to yield deoxyaspergillic acid. After asaC forms deoxyaspergillic acid, the cytochrome P450 asaD oxidizes the pyrazinone to the hydroxamic acid-containing bioactive metabolite aspergillic acid. The hydroxylase/desaturase asaB can then convert aspergillic acid to hydroxyaspergillic acid. Both aspergillic acid and hydroxyaspergillic acid can form complexes with iron producing ferriaspergillin analogs. In Aspergillus flavus (strain ATCC 200026 / FGSC A1120 / IAM 13836 / NRRL 3357 / JCM 12722 / SRRC 167), this protein is Cytochrome P450 monooxygenase asaD.